The chain runs to 281 residues: ATP synthase gamma chain (281 aa).

It belongs to the ATPase gamma chain family. In terms of assembly, F-type ATPases have 2 components, CF(1) - the catalytic core - and CF(0) - the membrane proton channel. CF(1) has five subunits: alpha(3), beta(3), gamma(1), delta(1), epsilon(1). CF(0) has three main subunits: a, b and c.

It is found in the cell membrane. Its function is as follows. Produces ATP from ADP in the presence of a proton gradient across the membrane. The gamma chain is believed to be important in regulating ATPase activity and the flow of protons through the CF(0) complex. In Desulfitobacterium hafniense (strain DSM 10664 / DCB-2), this protein is ATP synthase gamma chain.